We begin with the raw amino-acid sequence, 174 residues long: Methylated-DNA--protein-cysteine methyltransferase (174 aa).

The Nucleophile; methyl group acceptor role is filled by cysteine 141.

It belongs to the MGMT family.

It is found in the cytoplasm. It catalyses the reaction a 6-O-methyl-2'-deoxyguanosine in DNA + L-cysteinyl-[protein] = S-methyl-L-cysteinyl-[protein] + a 2'-deoxyguanosine in DNA. The catalysed reaction is a 4-O-methyl-thymidine in DNA + L-cysteinyl-[protein] = a thymidine in DNA + S-methyl-L-cysteinyl-[protein]. In terms of biological role, involved in the cellular defense against the biological effects of O6-methylguanine (O6-MeG) and O4-methylthymine (O4-MeT) in DNA. Repairs the methylated nucleobase in DNA by stoichiometrically transferring the methyl group to a cysteine residue in the enzyme. This is a suicide reaction: the enzyme is irreversibly inactivated. In Thermococcus kodakarensis (strain ATCC BAA-918 / JCM 12380 / KOD1) (Pyrococcus kodakaraensis (strain KOD1)), this protein is Methylated-DNA--protein-cysteine methyltransferase.